The chain runs to 282 residues: MEMO1 family protein Msm_1438 (282 aa).

It belongs to the MEMO1 family.

The chain is MEMO1 family protein Msm_1438 from Methanobrevibacter smithii (strain ATCC 35061 / DSM 861 / OCM 144 / PS).